The primary structure comprises 232 residues: Dehydrogenase OXI1 (232 aa).

Residues 1-20 form the signal peptide; that stretch reads MTETFKVAITFVSPSSEALA. An NADP(+)-binding site is contributed by Leu19. Asn28 is a glycosylation site (N-linked (GlcNAc...) asparagine). NADP(+)-binding residues include Asp42, Asn70, and Lys103. An N-linked (GlcNAc...) asparagine glycan is attached at Asn117. Active-site proton donor residues include Ser119 and Ser121. NADP(+) contacts are provided by Tyr133, Lys137, and Thr168. Catalysis depends on Tyr133, which acts as the Proton acceptor. Lys137 serves as the catalytic Lowers pKa of active site Tyr.

This sequence belongs to the short-chain dehydrogenases/reductases (SDR) family.

The enzyme catalyses a primary alcohol + NAD(+) = an aldehyde + NADH + H(+). It carries out the reaction a secondary alcohol + NAD(+) = a ketone + NADH + H(+). Its pathway is mycotoxin biosynthesis. Functionally, dehydrogenase; part of the Tox1A locus, one of the 2 loci that mediate the biosynthesis of T-toxin, a family of linear polyketides 37 to 45 carbons in length, of which the major component is 41 carbons, and which leads to high virulence to maize. One of the PKSs (PKS1 or PKS2) could synthesize a precursor, used subsequently by the other PKS as starter unit, to add additional carbons. Variability in the length of the final carbon backbone C35-47 could be achieved by varying the number of condensation cycles, or use of different starter or extender units or might be due to decarboxylation of the penultimate product, catalyzed by DEC1. Additional proteins are required for the biosynthesis of T-toxin, including oxidoreductases RED1, RED2, RED3, LAM1 and OXI1, as well as esterase TOX9. In Cochliobolus heterostrophus (strain C4 / ATCC 48331 / race T) (Southern corn leaf blight fungus), this protein is Dehydrogenase OXI1.